Consider the following 101-residue polypeptide: Urease subunit beta (101 aa).

It belongs to the urease beta subunit family. In terms of assembly, heterotrimer of UreA (gamma), UreB (beta) and UreC (alpha) subunits. Three heterotrimers associate to form the active enzyme.

Its subcellular location is the cytoplasm. It carries out the reaction urea + 2 H2O + H(+) = hydrogencarbonate + 2 NH4(+). The protein operates within nitrogen metabolism; urea degradation; CO(2) and NH(3) from urea (urease route): step 1/1. The protein is Urease subunit beta of Polaromonas naphthalenivorans (strain CJ2).